An 85-amino-acid chain; its full sequence is MTNIGSLLVDAAALMVTGMGVVFIFLTILIFLVRLMSKLVPQEVPPPITAPKAVKNQANHTSTVSPQVVAAISAAIHQHRASVAK.

A helical transmembrane segment spans residues 11–33; that stretch reads AAALMVTGMGVVFIFLTILIFLV.

Belongs to the OadG family. Heterotrimer of an alpha, a beta and a gamma subunit. Na(+) is required as a cofactor.

It localises to the cell membrane. The enzyme catalyses oxaloacetate + 2 Na(+)(in) + H(+) = pyruvate + 2 Na(+)(out) + CO2. Its function is as follows. Catalyzes the decarboxylation of oxaloacetate coupled to Na(+) translocation. The protein is Probable oxaloacetate decarboxylase gamma chain of Vibrio vulnificus (strain CMCP6).